We begin with the raw amino-acid sequence, 193 residues long: UMP-CMP kinase (193 aa).

13–18 is an ATP binding site; sequence GAGKGT. The segment at 33 to 63 is NMP; that stretch reads SAGDLLRDERKKPDSQYGELIESYIRDGKIV. A ribonucleoside 5'-phosphate contacts are provided by residues Arg-39, 61–63, and 93–96; these read KIV and GFPR. Residue Asn-100 coordinates CMP. Positions 133-143 are LID; that stretch reads ERGKSSGRSDD. Arg-134 provides a ligand contact to ATP. Residues Arg-140 and Arg-151 each contribute to the a ribonucleoside 5'-phosphate site. An ATP-binding site is contributed by Lys-179.

The protein belongs to the adenylate kinase family. UMP-CMP kinase subfamily. Monomer. The cofactor is Mg(2+).

It is found in the nucleus. Its subcellular location is the cytoplasm. It carries out the reaction CMP + ATP = CDP + ADP. The catalysed reaction is dCMP + ATP = dCDP + ADP. The enzyme catalyses UMP + ATP = UDP + ADP. It catalyses the reaction a 2'-deoxyribonucleoside 5'-diphosphate + ATP = a 2'-deoxyribonucleoside 5'-triphosphate + ADP. It carries out the reaction a ribonucleoside 5'-diphosphate + ATP = a ribonucleoside 5'-triphosphate + ADP. Its function is as follows. Catalyzes the phosphorylation of pyrimidine nucleoside monophosphates at the expense of ATP. Plays an important role in de novo pyrimidine nucleotide biosynthesis. Has preference for UMP and CMP as phosphate acceptors. Also displays broad nucleoside diphosphate kinase activity. The chain is UMP-CMP kinase (cmpk1) from Xenopus laevis (African clawed frog).